The primary structure comprises 541 residues: Glucose-6-phosphate isomerase (541 aa).

Glu346 serves as the catalytic Proton donor. Catalysis depends on residues His377 and Lys506.

It belongs to the GPI family.

The protein localises to the cytoplasm. It carries out the reaction alpha-D-glucose 6-phosphate = beta-D-fructose 6-phosphate. It functions in the pathway carbohydrate biosynthesis; gluconeogenesis. It participates in carbohydrate degradation; glycolysis; D-glyceraldehyde 3-phosphate and glycerone phosphate from D-glucose: step 2/4. Its function is as follows. Catalyzes the reversible isomerization of glucose-6-phosphate to fructose-6-phosphate. The protein is Glucose-6-phosphate isomerase of Rhizobium etli (strain ATCC 51251 / DSM 11541 / JCM 21823 / NBRC 15573 / CFN 42).